We begin with the raw amino-acid sequence, 260 residues long: ATP synthase subunit a (260 aa).

Helical transmembrane passes span 29–49, 95–115, 124–144, 151–171, 191–211, 213–233, and 237–257; these read FSFT…LLLI, FFPC…QGMI, HFLI…IVGF, FFSF…LVLL, MMAG…MLCM, EIFY…LTGL, and VAIL…NDAI.

This sequence belongs to the ATPase A chain family. F-type ATPases have 2 components, CF(1) - the catalytic core - and CF(0) - the membrane proton channel. CF(1) has five subunits: alpha(3), beta(3), gamma(1), delta(1), epsilon(1). CF(0) has three main subunits: a, b and c.

The protein localises to the mitochondrion inner membrane. Mitochondrial membrane ATP synthase (F(1)F(0) ATP synthase or Complex V) produces ATP from ADP in the presence of a proton gradient across the membrane which is generated by electron transport complexes of the respiratory chain. F-type ATPases consist of two structural domains, F(1) - containing the extramembraneous catalytic core and F(0) - containing the membrane proton channel, linked together by a central stalk and a peripheral stalk. During catalysis, ATP synthesis in the catalytic domain of F(1) is coupled via a rotary mechanism of the central stalk subunits to proton translocation. Key component of the proton channel; it may play a direct role in the translocation of protons across the membrane. The sequence is that of ATP synthase subunit a (ATP6) from Brassica napus (Rape).